The primary structure comprises 353 residues: Quinolinate synthase (353 aa).

Iminosuccinate-binding residues include His-47 and Ser-68. Cys-113 is a binding site for [4Fe-4S] cluster. Residues 139 to 141 (YAN) and Ser-156 each bind iminosuccinate. Cys-200 contributes to the [4Fe-4S] cluster binding site. Iminosuccinate-binding positions include 226 to 228 (HPE) and Thr-243. Cys-297 lines the [4Fe-4S] cluster pocket.

It belongs to the quinolinate synthase family. Type 1 subfamily. The cofactor is [4Fe-4S] cluster.

The protein resides in the cytoplasm. The enzyme catalyses iminosuccinate + dihydroxyacetone phosphate = quinolinate + phosphate + 2 H2O + H(+). It participates in cofactor biosynthesis; NAD(+) biosynthesis; quinolinate from iminoaspartate: step 1/1. In terms of biological role, catalyzes the condensation of iminoaspartate with dihydroxyacetone phosphate to form quinolinate. This is Quinolinate synthase from Vibrio parahaemolyticus serotype O3:K6 (strain RIMD 2210633).